A 205-amino-acid polypeptide reads, in one-letter code: Large ribosomal subunit protein uL3 (205 aa).

It belongs to the universal ribosomal protein uL3 family. In terms of assembly, part of the 50S ribosomal subunit. Forms a cluster with proteins L14 and L19.

Its function is as follows. One of the primary rRNA binding proteins, it binds directly near the 3'-end of the 23S rRNA, where it nucleates assembly of the 50S subunit. The protein is Large ribosomal subunit protein uL3 of Porphyromonas gingivalis (strain ATCC 33277 / DSM 20709 / CIP 103683 / JCM 12257 / NCTC 11834 / 2561).